The chain runs to 129 residues: Putative reactive intermediate deaminase TdcF (129 aa).

N6-(pyridoxal phosphate)lysine is present on lysine 58. Residues 105–107 (RSC) and glutamate 120 contribute to the substrate site.

The protein belongs to the RutC family. In terms of assembly, homotrimer.

It functions in the pathway amino-acid degradation; L-threonine degradation via propanoate pathway. Functionally, may be a post-translational regulator that controls the metabolic fate of L-threonine or the potentially toxic intermediate 2-ketobutyrate. In Escherichia coli O6:H1 (strain CFT073 / ATCC 700928 / UPEC), this protein is Putative reactive intermediate deaminase TdcF (tdcF).